Reading from the N-terminus, the 1935-residue chain is Myosin-7 (1935 aa).

The Myosin N-terminal SH3-like domain maps to 32–81 (DLKKDVFVPDDKEEFVKATILSREGGKVTAETEHGKTVTVKEDQVLQQNP). The 694-residue stretch at 85–778 (DKIEDMAMLT…LLGLLEEMRD (694 aa)) folds into the Myosin motor domain. Lys-129 is subject to N6,N6,N6-trimethyllysine. Residue 178-185 (GESGAGKT) participates in ATP binding. Thr-378 carries the phosphothreonine modification. Actin-binding regions lie at residues 655-677 (LNKL…IPNE) and 757-771 (KFGH…GLLG). In terms of domain architecture, IQ spans 781-810 (LSRIITRIQAQSRGVLSRMEFKKLLERRDS). Positions 839-1935 (LLKSAETEKE…DIGTKGLNEE (1097 aa)) form a coiled coil. A phosphoserine mark is found at Ser-1137 and Ser-1269. A Phosphothreonine modification is found at Thr-1282. Tyr-1308 carries the post-translational modification Phosphotyrosine. Thr-1309 carries the phosphothreonine modification. Ser-1510 is subject to Phosphoserine. Thr-1513 carries the post-translational modification Phosphothreonine. The segment at 1907–1935 (EERADIAESQVNKLRAKSRDIGTKGLNEE) is disordered. Residues 1923–1935 (KSRDIGTKGLNEE) are compositionally biased toward basic and acidic residues.

This sequence belongs to the TRAFAC class myosin-kinesin ATPase superfamily. Myosin family. Muscle myosin is a hexameric protein that consists of 2 heavy chain subunits (MHC), 2 alkali light chain subunits (MLC) and 2 regulatory light chain subunits (MLC-2). Interacts with ECPAS. Interacts (via C-terminus) with LRRC39.

The protein resides in the cytoplasm. Its subcellular location is the myofibril. It is found in the sarcomere. Functionally, myosins are actin-based motor molecules with ATPase activity essential for muscle contraction. Forms regular bipolar thick filaments that, together with actin thin filaments, constitute the fundamental contractile unit of skeletal and cardiac muscle. The sequence is that of Myosin-7 (MYH7) from Bos taurus (Bovine).